Reading from the N-terminus, the 598-residue chain is Vacuolin-A (598 aa).

The stretch at 482–539 forms a coiled coil; sequence IKTTEARLKAETDNIALEQRNKAIISESQAKLSSAQREAESLLITAEAQKKASELQGE.

This sequence belongs to the vacuolin family.

It is found in the endosome membrane. It localises to the lysosome. The polypeptide is Vacuolin-A (vacA) (Dictyostelium discoideum (Social amoeba)).